Consider the following 238-residue polypeptide: uncharacterized protein (238 aa).

Positions 1–68 (MIYKSIAERL…HGSGTYLVRK (68 aa)) constitute an HTH gntR-type domain. The segment at residues 28–47 (EKKLAEEFAVSRMTIRKAID) is a DNA-binding region (H-T-H motif).

This is an uncharacterized protein from Escherichia coli (strain K12).